The chain runs to 484 residues: Nuclear rim protein 1 (484 aa).

Serine 3 is modified (phosphoserine). 2 consecutive transmembrane segments (helical) span residues 145 to 165 (FTIF…MFGY) and 252 to 272 (TAIV…AIVF). A disordered region spans residues 416–457 (SSNENLEKGGAFLPNQDQNRPSKSLSPLRKTPLSARQKRFEG). Serine 417 is subject to Phosphoserine. Positions 430–440 (NQDQNRPSKSL) are enriched in polar residues. The residue at position 474 (serine 474) is a Phosphoserine.

This sequence belongs to the NUR1 family. In terms of assembly, interacts with CSM1.

The protein resides in the nucleus membrane. Its function is as follows. Member of a perinuclear network that controls recombination at multiple loci to maintain genome stability. Required for rDNA repeat stability. The chain is Nuclear rim protein 1 (NUR1) from Saccharomyces cerevisiae (strain Lalvin EC1118 / Prise de mousse) (Baker's yeast).